The chain runs to 251 residues: Ubiquinone/menaquinone biosynthesis C-methyltransferase UbiE (251 aa).

S-adenosyl-L-methionine contacts are provided by residues Thr74, Asp95, 123–124, and Ser140; that span reads NA.

It belongs to the class I-like SAM-binding methyltransferase superfamily. MenG/UbiE family.

It carries out the reaction a 2-demethylmenaquinol + S-adenosyl-L-methionine = a menaquinol + S-adenosyl-L-homocysteine + H(+). It catalyses the reaction a 2-methoxy-6-(all-trans-polyprenyl)benzene-1,4-diol + S-adenosyl-L-methionine = a 5-methoxy-2-methyl-3-(all-trans-polyprenyl)benzene-1,4-diol + S-adenosyl-L-homocysteine + H(+). Its pathway is quinol/quinone metabolism; menaquinone biosynthesis; menaquinol from 1,4-dihydroxy-2-naphthoate: step 2/2. The protein operates within cofactor biosynthesis; ubiquinone biosynthesis. In terms of biological role, methyltransferase required for the conversion of demethylmenaquinol (DMKH2) to menaquinol (MKH2) and the conversion of 2-polyprenyl-6-methoxy-1,4-benzoquinol (DDMQH2) to 2-polyprenyl-3-methyl-6-methoxy-1,4-benzoquinol (DMQH2). The protein is Ubiquinone/menaquinone biosynthesis C-methyltransferase UbiE of Pectobacterium carotovorum subsp. carotovorum (strain PC1).